Consider the following 191-residue polypeptide: Peptidyl-tRNA hydrolase (191 aa).

A tRNA-binding site is contributed by tyrosine 14. Residue histidine 19 is the Proton acceptor of the active site. Positions 64, 66, and 113 each coordinate tRNA.

Belongs to the PTH family. As to quaternary structure, monomer.

It localises to the cytoplasm. It carries out the reaction an N-acyl-L-alpha-aminoacyl-tRNA + H2O = an N-acyl-L-amino acid + a tRNA + H(+). In terms of biological role, hydrolyzes ribosome-free peptidyl-tRNAs (with 1 or more amino acids incorporated), which drop off the ribosome during protein synthesis, or as a result of ribosome stalling. Functionally, catalyzes the release of premature peptidyl moieties from peptidyl-tRNA molecules trapped in stalled 50S ribosomal subunits, and thus maintains levels of free tRNAs and 50S ribosomes. The chain is Peptidyl-tRNA hydrolase from Fusobacterium nucleatum subsp. nucleatum (strain ATCC 25586 / DSM 15643 / BCRC 10681 / CIP 101130 / JCM 8532 / KCTC 2640 / LMG 13131 / VPI 4355).